Consider the following 190-residue polypeptide: GTP cyclohydrolase 1 (190 aa).

The Zn(2+) site is built by cysteine 80, histidine 83, and cysteine 151.

The protein belongs to the GTP cyclohydrolase I family. As to quaternary structure, toroid-shaped homodecamer, composed of two pentamers of five dimers.

The catalysed reaction is GTP + H2O = 7,8-dihydroneopterin 3'-triphosphate + formate + H(+). It participates in cofactor biosynthesis; 7,8-dihydroneopterin triphosphate biosynthesis; 7,8-dihydroneopterin triphosphate from GTP: step 1/1. In Rickettsia prowazekii (strain Madrid E), this protein is GTP cyclohydrolase 1 (folE).